Reading from the N-terminus, the 344-residue chain is Fructose-1,6-bisphosphatase class 1 (344 aa).

Glutamate 91, aspartate 110, leucine 112, and aspartate 113 together coordinate Mg(2+). Substrate contacts are provided by residues 113 to 116 (DGSS) and asparagine 200. Glutamate 272 provides a ligand contact to Mg(2+).

This sequence belongs to the FBPase class 1 family. In terms of assembly, homotetramer. The cofactor is Mg(2+).

It localises to the cytoplasm. The enzyme catalyses beta-D-fructose 1,6-bisphosphate + H2O = beta-D-fructose 6-phosphate + phosphate. Its pathway is carbohydrate biosynthesis; Calvin cycle. The polypeptide is Fructose-1,6-bisphosphatase class 1 (Rhodopseudomonas palustris (strain BisA53)).